Here is a 211-residue protein sequence, read N- to C-terminus: ATP phosphoribosyltransferase (211 aa).

It belongs to the ATP phosphoribosyltransferase family. Short subfamily. In terms of assembly, heteromultimer composed of HisG and HisZ subunits.

It is found in the cytoplasm. It catalyses the reaction 1-(5-phospho-beta-D-ribosyl)-ATP + diphosphate = 5-phospho-alpha-D-ribose 1-diphosphate + ATP. It functions in the pathway amino-acid biosynthesis; L-histidine biosynthesis; L-histidine from 5-phospho-alpha-D-ribose 1-diphosphate: step 1/9. Its function is as follows. Catalyzes the condensation of ATP and 5-phosphoribose 1-diphosphate to form N'-(5'-phosphoribosyl)-ATP (PR-ATP). Has a crucial role in the pathway because the rate of histidine biosynthesis seems to be controlled primarily by regulation of HisG enzymatic activity. The polypeptide is ATP phosphoribosyltransferase (Bacillus cereus (strain B4264)).